Consider the following 635-residue polypeptide: Extracellular metalloproteinase 9 (635 aa).

The signal sequence occupies residues 1 to 19; sequence MHGLLLAAGLLTLPLRALA. A propeptide spanning residues 20-246 is cleaved from the precursor; the sequence is HPGHQSTSIL…IHGVTDYVAD (227 aa). A glycan (N-linked (GlcNAc...) asparagine) is linked at Asn274. Residues 279–307 are disordered; sequence TWHSDGNTRYPTTRGNNGIAQDNPSGGTG. N-linked (GlcNAc...) asparagine glycosylation is present at Asn413. Zn(2+) is bound at residue His430. Glu431 is a catalytic residue. His434 lines the Zn(2+) pocket. An N-linked (GlcNAc...) asparagine glycan is attached at Asn475.

It belongs to the peptidase M36 family. Zn(2+) serves as cofactor.

The protein resides in the secreted. Its function is as follows. Secreted metalloproteinase that allows assimilation of proteinaceous substrates. This Uncinocarpus reesii (strain UAMH 1704) protein is Extracellular metalloproteinase 9 (MEP9).